The following is a 408-amino-acid chain: F-box A protein 155 (408 aa).

The interval 1–22 is disordered; sequence MSDRGSDQSSSSSDSAQHIPPK.

This sequence belongs to the FTH family.

In Caenorhabditis elegans, this protein is F-box A protein 155 (fbxa-155).